Consider the following 563-residue polypeptide: Probable Xaa-Pro aminopeptidase PEPP (563 aa).

Mn(2+) contacts are provided by Asp-331, Asp-342, Glu-491, and Glu-532.

The protein belongs to the peptidase M24B family. The cofactor is Mn(2+).

It carries out the reaction Release of any N-terminal amino acid, including proline, that is linked to proline, even from a dipeptide or tripeptide.. Its function is as follows. Catalyzes the removal of a penultimate prolyl residue from the N-termini of peptides. In Verticillium alfalfae (strain VaMs.102 / ATCC MYA-4576 / FGSC 10136) (Verticillium wilt of alfalfa), this protein is Probable Xaa-Pro aminopeptidase PEPP (PEPP).